The primary structure comprises 522 residues: TNF receptor-associated factor 6 (522 aa).

The interaction with TAX1BP1 stretch occupies residues 1–354 (MSLLNCENSC…EAQQCNGIYI (354 aa)). An RING-type; degenerate zinc finger spans residues 70–109 (CPICLMALREAVQTPCGHRFCKACIIKSIRDAGHKCPVDN). Residue Lys124 forms a Glycyl lysine isopeptide (Lys-Gly) (interchain with G-Cter in SUMO); alternate linkage. Lys124 participates in a covalent cross-link: Glycyl lysine isopeptide (Lys-Gly) (interchain with G-Cter in ubiquitin); alternate. Lys142 is covalently cross-linked (Glycyl lysine isopeptide (Lys-Gly) (interchain with G-Cter in SUMO)). 2 consecutive TRAF-type zinc fingers follow at residues 150-202 (DHQA…EDKE) and 203-259 (IHDQ…NHLA). Residues 288–348 (YVSEVRNFQE…DKVAEIEAQQ (61 aa)) adopt a coiled-coil conformation. Residue Lys319 forms a Glycyl lysine isopeptide (Lys-Gly) (interchain with G-Cter in ubiquitin) linkage. The MATH domain occupies 350-499 (NGIYIWKIGN…DDTLLVRCEV (150 aa)). The interaction with TANK stretch occupies residues 355-522 (WKIGNFGMHL…FQPRSTDSGV (168 aa)). Lys453 is covalently cross-linked (Glycyl lysine isopeptide (Lys-Gly) (interchain with G-Cter in SUMO)).

Belongs to the TNF receptor-associated factor family. A subfamily. As to quaternary structure, homotrimer. Homooligomer. N-terminal region is dimeric while C-terminal region is trimeric; maybe providing a mode of oligomerization. Upon IL1B treatment, forms a complex with PELI1, IRAK1, IRAK4 and MYD88; this complex recruits MAP3K7/TAK1, TAB1 and TAB2 to mediate NF-kappa-B activation. Direct binding of SMAD6 to PELI1 prevents the complex formation and hence negatively regulates IL1R-TLR signaling and eventually NF-kappa-B-mediated gene expression. Binds to TNFRSF5/CD40 and TNFRSF11A/RANK. Associates with NGFR, TNFRSF17, IRAK2, IRAK3, RIPK2, MAP3K1, MAP3K5, MAP3K14, CSK, TRAF, TRAF-interacting protein TRIP and TNF receptor associated protein TDP2. Interacts with IL17R. Interacts with SQSTM1 bridging NTRK1 and NGFR. Forms a ternary complex with SQSTM1 and PRKCZ. Interacts with PELI2 and PELI3. Binds UBE2V1. Interacts with TAX1BP1; this interaction mediates deubiquitination of TRAF6 and inhibition of NF-kappa-B activation. Interacts with ZNF675. Interacts with ARRB1 and ARRB2. Interacts with MAP3K7 and TAB1/MAP3K7IP1; during IL-1 signaling. Interacts with UBE2N. Interacts with TGFBR1, HDAC1 and RANGAP1. Interacts with AKT1, AKT2 and AKT3. Interacts (via TRAF domains) with NUMBL (via C-terminal). Interacts with RBCK1. Interacts with LIMD1 (via LIM domains). Interacts with RSAD2/viperin. Interacts (via C-terminus) with EIF2AK2/PKR (via the kinase catalytic domain). Interacts with ZFAND5. Interacts with IL1RL1. Interacts with TRAFD1. Interacts with AJUBA. Interacts with MAVS/IPS1. Interacts (via TRAF domains) with DYNC2I2 (via WD domains). Interacts with IFIT3 (via N-terminus). Interacts with TICAM2. Interacts with CARD14. Interacts with CD40 and MAP3K8; the interaction is required for ERK activation. Interacts with TICAM1 and this interaction is enhanced in the presence of WDFY1. Interacts with TANK; this interaction increases in response to DNA damage. Interacts with USP10; this interaction increases in response to DNA damage. Interacts with ZC3H12A; this interaction increases in response to DNA damage and is stimulated by TANK. Interacts with WDFY3. Interacts with TRIM13. Interacts with GPS2. Interacts (via C-terminus) with SASH1. Interacts with LRRC19. Interacts with IL17RA and TRAF3IP2. Interacts with TOMM70. Interacts with AMBRA1; interaction is required to mediate 'Lys-63'-linked ubiquitination of ULK1. Interacts with CRBN; this interaction inhibits TLR4-mediated signaling by preventing TRAF6-mediated ubiquitination of ECSIT. In terms of processing, sumoylated on Lys-124, Lys-142 and Lys-453 with SUMO1. Post-translationally, polyubiquitinated on Lys-124 by TRAF3IP2; after cell stimulation with IL17A. Polyubiquitinated on Lys-124; after cell stimulation with IL1B or TGFB. This ligand-induced cell stimulation leads to dimerization/oligomerization of TRAF6 molecules, followed by auto-ubiquitination which involves UBE2N and UBE2V1 and leads to TRAF6 activation. This 'Lys-63' site-specific poly-ubiquitination appears to be associated with the activation of signaling molecules. Deubiquitinated by USP10 in a TANK-dependent manner, leading to the negative regulation of NF-kappa-B signaling upon DNA damage. LRRC19 induces 'Lys-63' ubiquitination. Ubiquitinated at Lys-319 by the SCF(FBXL2) complex, leading to its degradation by the proteasome.

The protein localises to the cytoplasm. It is found in the cell cortex. It localises to the nucleus. Its subcellular location is the lipid droplet. It carries out the reaction S-ubiquitinyl-[E2 ubiquitin-conjugating enzyme]-L-cysteine + [acceptor protein]-L-lysine = [E2 ubiquitin-conjugating enzyme]-L-cysteine + N(6)-ubiquitinyl-[acceptor protein]-L-lysine.. Its pathway is protein modification; protein ubiquitination. Functionally, E3 ubiquitin ligase that, together with UBE2N and UBE2V1, mediates the synthesis of 'Lys-63'-linked-polyubiquitin chains conjugated to proteins, such as ECSIT, IKBKG, IRAK1, AKT1 and AKT2. Also mediates ubiquitination of free/unanchored polyubiquitin chain that leads to MAP3K7 activation. Leads to the activation of NF-kappa-B and JUN. Seems to also play a role in dendritic cells (DCs) maturation and/or activation. Represses c-Myb-mediated transactivation, in B-lymphocytes. Adapter protein that seems to play a role in signal transduction initiated via TNF receptor, IL-1 receptor and IL-17 receptor. Regulates osteoclast differentiation by mediating the activation of adapter protein complex 1 (AP-1) and NF-kappa-B, in response to RANK-L stimulation. Together with MAP3K8, mediates CD40 signals that activate ERK in B-cells and macrophages, and thus may play a role in the regulation of immunoglobulin production. Acts as a regulator of the JNK and NF-kappa-B signaling pathways by initiating assembly of heterotypic 'Lys-63'-/'Lys-48'-linked branched ubiquitin chains that are then recognized by TAB2: TRAF6 catalyzes initial 'Lys-63'-linked-polyubiquitin chains that are then branched via 'Lys-48'-linked polyubiquitin by HUWE1. 'Lys-63'-/'Lys-48'-linked branched ubiquitin chains protect 'Lys-63'-linkages from CYLD deubiquitination. Also participates in the TCR signaling by ubiquitinating LAT. The sequence is that of TNF receptor-associated factor 6 (TRAF6) from Cercocebus atys (Sooty mangabey).